The sequence spans 268 residues: Glucosamine-6-phosphate deaminase (268 aa).

Residue Asp-72 is the Proton acceptor; for enolization step of the active site. Asp-141 serves as the catalytic For ring-opening step. His-143 (proton acceptor; for ring-opening step) is an active-site residue. Glu-148 functions as the For ring-opening step in the catalytic mechanism.

Belongs to the glucosamine/galactosamine-6-phosphate isomerase family. NagB subfamily.

It carries out the reaction alpha-D-glucosamine 6-phosphate + H2O = beta-D-fructose 6-phosphate + NH4(+). The protein operates within amino-sugar metabolism; N-acetylneuraminate degradation; D-fructose 6-phosphate from N-acetylneuraminate: step 5/5. Its activity is regulated as follows. Allosterically activated by N-acetylglucosamine 6-phosphate (GlcNAc6P). In terms of biological role, catalyzes the reversible isomerization-deamination of glucosamine 6-phosphate (GlcN6P) to form fructose 6-phosphate (Fru6P) and ammonium ion. The polypeptide is Glucosamine-6-phosphate deaminase (Borreliella afzelii (strain PKo) (Borrelia afzelii)).